The primary structure comprises 532 residues: 2,3-bisphosphoglycerate-independent phosphoglycerate mutase (532 aa).

Mn(2+) contacts are provided by D15 and S65. Residue S65 is the Phosphoserine intermediate of the active site. Residues H126, 156 to 157, R188, R194, 258 to 261, and K331 each bind substrate; these read RD and RPDR. Residues D398, H402, D439, H440, and H457 each contribute to the Mn(2+) site.

This sequence belongs to the BPG-independent phosphoglycerate mutase family. As to quaternary structure, monomer. The cofactor is Mn(2+).

The catalysed reaction is (2R)-2-phosphoglycerate = (2R)-3-phosphoglycerate. The protein operates within carbohydrate degradation; glycolysis; pyruvate from D-glyceraldehyde 3-phosphate: step 3/5. In terms of biological role, catalyzes the interconversion of 2-phosphoglycerate and 3-phosphoglycerate. The polypeptide is 2,3-bisphosphoglycerate-independent phosphoglycerate mutase (Cyanothece sp. (strain PCC 7425 / ATCC 29141)).